The chain runs to 270 residues: L-fucose dehydrogenase (270 aa).

12 residues coordinate NAD(+): arginine 19, isoleucine 21, aspartate 40, lysine 41, aspartate 62, valine 63, asparagine 89, tyrosine 154, lysine 158, isoleucine 187, threonine 189, and leucine 191.

The protein belongs to the short-chain dehydrogenases/reductases (SDR) family.

The catalysed reaction is L-fucose + NAD(+) = L-fucono-1,5-lactone + NADH + H(+). The enzyme catalyses D-arabinose + NAD(+) = D-arabinono-1,5-lactone + NADH + H(+). It carries out the reaction L-galactose + NAD(+) = L-galactono-1,5-lactone + NADH + H(+). In terms of biological role, catalyzes the NAD(+)-dependent oxidation of L-fucose, yielding L-fucono-1,5-lactone, which rapidly converts spontaneously to L-fucone-1,4-lactone. Does not use NADPH. Displays low activity on L-fucose, D-arabinose and L-galactose compared with rabbit and human. This is consitent with the low L-fucose metabolism observed in this species. The protein is L-fucose dehydrogenase (Hsd17b14) of Rattus norvegicus (Rat).